A 579-amino-acid chain; its full sequence is PCNA-interacting partner (579 aa).

The tract at residues 480–543 (TSFGNVHLDR…AKIPKKSNDS (64 aa)) is disordered. Positions 486 to 496 (HLDRSKNEKVS) are enriched in basic and acidic residues.

This sequence belongs to the PARI family. In terms of assembly, interacts with RAD51 and PCNA. Interacts with PARP1. Interacts with TASOR. Restricted to testis. Overexpressed in multiple cancer cells.

It localises to the cytoplasm. The protein resides in the nucleus. Functionally, required to suppress inappropriate homologous recombination, thereby playing a central role DNA repair and in the maintenance of genomic stability. Antagonizes homologous recombination by interfering with the formation of the RAD51-DNA homologous recombination structure. Binds single-strand DNA and poly(A) homopolymers. Positively regulate the poly(ADP-ribosyl)ation activity of PARP1; however such function may be indirect. This is PCNA-interacting partner (PARPBP) from Homo sapiens (Human).